The sequence spans 361 residues: MRTLNLDLGERSYPIFIGQSLLQNPALFTPHLSSQQVLVVTNTTVAPLYLAQLKATLSHCDKLDSVVLPDGEQHKTLGVLNTIFDTLIAQRHNRKTTLIALGGGVVGDMTGFAAACYQRGVNFIQVPTTLLSQVDSSVGGKTGVNHPQGKNMIGAFYQPQAVVIDTQVLDTLPERELSAGLAEVIKYGIIADIPFFEWLETNMPALLARESEALAYAIEVSCAIKARVVAQDEKESGIRAILNLGHTFGHAIESHQGYGDWVHGEAVGAGMVLACELSSRLGWLDAKECDRAVALIAAAGLPTEPPSGMSPDAFMRYMAIDKKVLDGGLRLVLQRGLGNAVVTGDFDAVVLQQLLRDRCIG.

NAD(+) is bound by residues 70–75, 104–108, 128–129, lysine 141, and lysine 150; these read DGEQHK, GVVGD, and TT. 3 residues coordinate Zn(2+): glutamate 183, histidine 246, and histidine 263.

Belongs to the sugar phosphate cyclases superfamily. Dehydroquinate synthase family. It depends on Co(2+) as a cofactor. Zn(2+) serves as cofactor. Requires NAD(+) as cofactor.

Its subcellular location is the cytoplasm. It catalyses the reaction 7-phospho-2-dehydro-3-deoxy-D-arabino-heptonate = 3-dehydroquinate + phosphate. It participates in metabolic intermediate biosynthesis; chorismate biosynthesis; chorismate from D-erythrose 4-phosphate and phosphoenolpyruvate: step 2/7. Functionally, catalyzes the conversion of 3-deoxy-D-arabino-heptulosonate 7-phosphate (DAHP) to dehydroquinate (DHQ). The polypeptide is 3-dehydroquinate synthase (Teredinibacter turnerae (strain ATCC 39867 / T7901)).